An 873-amino-acid polypeptide reads, in one-letter code: Leucine--tRNA ligase (873 aa).

The 'HIGH' region motif lies at 43–53 (PYPSGSLHMGH). The 'KMSKS' region signature appears at 624–628 (TMSKS). Lysine 627 provides a ligand contact to ATP.

This sequence belongs to the class-I aminoacyl-tRNA synthetase family.

Its subcellular location is the cytoplasm. It carries out the reaction tRNA(Leu) + L-leucine + ATP = L-leucyl-tRNA(Leu) + AMP + diphosphate. In Synechococcus sp. (strain JA-3-3Ab) (Cyanobacteria bacterium Yellowstone A-Prime), this protein is Leucine--tRNA ligase.